We begin with the raw amino-acid sequence, 542 residues long: GMP synthase [glutamine-hydrolyzing] (542 aa).

In terms of domain architecture, Glutamine amidotransferase type-1 spans 28–218; it reads MIVILDFGSQ…VYHICECEPT (191 aa). Catalysis depends on Cys105, which acts as the Nucleophile. Catalysis depends on residues His192 and Glu194. The GMPS ATP-PPase domain maps to 219 to 417; sequence WTTEAFVEEA…IGLPEEIVRR (199 aa). Position 246–252 (246–252) interacts with ATP; that stretch reads SGGVDSS.

As to quaternary structure, homodimer.

It catalyses the reaction XMP + L-glutamine + ATP + H2O = GMP + L-glutamate + AMP + diphosphate + 2 H(+). Its pathway is purine metabolism; GMP biosynthesis; GMP from XMP (L-Gln route): step 1/1. Catalyzes the synthesis of GMP from XMP. This chain is GMP synthase [glutamine-hydrolyzing], found in Gloeothece citriformis (strain PCC 7424) (Cyanothece sp. (strain PCC 7424)).